The sequence spans 617 residues: Kelch-like protein diablo (617 aa).

The segment at 1-55 (MGDPLLPGSTGLGSGGTAAATGGTGTTGTGLGSGGTSGTERPPSPARLTHTSEKH) is disordered. Over residues 10–37 (TGLGSGGTAAATGGTGTTGTGLGSGGTS) the composition is skewed to gly residues. One can recognise a BTB domain in the interval 73-140 (CDVVLNVGGR…CYTAHIIVEE (68 aa)). A BACK domain is found at 175 to 277 (CLGIRAFADT…SPKFLVGTVG (103 aa)). Kelch repeat units follow at residues 324–370 (VLFA…VLND), 372–418 (LYAV…VLDG), 419–465 (FLYA…VLSG), 467–512 (LYAI…VFNN), 514–559 (IYAV…VVNG), and 560–606 (QLYA…VMRA).

It functions in the pathway protein modification; protein ubiquitination. Probable substrate-specific adapter of an E3 ubiquitin-protein ligase complex which mediates the ubiquitination and subsequent proteasomal degradation of target proteins. May have a role in synapse differentiation and growth. This chain is Kelch-like protein diablo, found in Drosophila mojavensis (Fruit fly).